The sequence spans 721 residues: Polyribonucleotide nucleotidyltransferase (721 aa).

The Mg(2+) site is built by Asp-495 and Asp-501. One can recognise a KH domain in the interval 562-621; that stretch reads PRLLSFRIDPELIGTVIGPGGRTIKGITERTNTKIDIEDGGIVTIASHDGAAAEEAQKII. In terms of domain architecture, S1 motif spans 631-699; it reads GEVFSGSITR…NRGRINLTLR (69 aa).

The protein belongs to the polyribonucleotide nucleotidyltransferase family. Requires Mg(2+) as cofactor.

The protein localises to the cytoplasm. The catalysed reaction is RNA(n+1) + phosphate = RNA(n) + a ribonucleoside 5'-diphosphate. Functionally, involved in mRNA degradation. Catalyzes the phosphorolysis of single-stranded polyribonucleotides processively in the 3'- to 5'-direction. The chain is Polyribonucleotide nucleotidyltransferase from Synechococcus sp. (strain CC9605).